The following is a 532-amino-acid chain: Putative L-lactate permease (532 aa).

A run of 14 helical transmembrane segments spans residues 23–43, 56–76, 101–121, 129–149, 152–172, 180–200, 213–233, 234–254, 274–294, 346–366, 387–407, 420–440, 462–482, and 508–528; these read ALPS…VHLL, VVSA…AILF, VAQL…ASGF, APIL…ALIM, VPVS…ALKL, IGSI…LLAL, IVFI…IAQV, NYEF…VWAA, AGEV…LIVT, LLYV…IPFF, PFIA…GGEH, ISGS…SFFS, GISV…GNMV, and IIPM…LVPL.

This sequence belongs to the lactate permease family.

It localises to the cell inner membrane. In terms of biological role, may play a role in L-lactate transport. The protein is Putative L-lactate permease of Haemophilus influenzae (strain ATCC 51907 / DSM 11121 / KW20 / Rd).